The following is a 67-amino-acid chain: Large ribosomal subunit protein bL35 (67 aa).

It belongs to the bacterial ribosomal protein bL35 family.

The polypeptide is Large ribosomal subunit protein bL35 (Leptospira interrogans serogroup Icterohaemorrhagiae serovar Lai (strain 56601)).